The following is a 487-amino-acid chain: Proline--tRNA ligase (487 aa).

This sequence belongs to the class-II aminoacyl-tRNA synthetase family. ProS type 3 subfamily. In terms of assembly, homodimer.

It localises to the cytoplasm. It carries out the reaction tRNA(Pro) + L-proline + ATP = L-prolyl-tRNA(Pro) + AMP + diphosphate. In terms of biological role, catalyzes the attachment of proline to tRNA(Pro) in a two-step reaction: proline is first activated by ATP to form Pro-AMP and then transferred to the acceptor end of tRNA(Pro). The protein is Proline--tRNA ligase of Pyrobaculum neutrophilum (strain DSM 2338 / JCM 9278 / NBRC 100436 / V24Sta) (Thermoproteus neutrophilus).